The following is a 95-amino-acid chain: Aspartyl/glutamyl-tRNA(Asn/Gln) amidotransferase subunit C (95 aa).

This sequence belongs to the GatC family. In terms of assembly, heterotrimer of A, B and C subunits.

It carries out the reaction L-glutamyl-tRNA(Gln) + L-glutamine + ATP + H2O = L-glutaminyl-tRNA(Gln) + L-glutamate + ADP + phosphate + H(+). The catalysed reaction is L-aspartyl-tRNA(Asn) + L-glutamine + ATP + H2O = L-asparaginyl-tRNA(Asn) + L-glutamate + ADP + phosphate + 2 H(+). Its function is as follows. Allows the formation of correctly charged Asn-tRNA(Asn) or Gln-tRNA(Gln) through the transamidation of misacylated Asp-tRNA(Asn) or Glu-tRNA(Gln) in organisms which lack either or both of asparaginyl-tRNA or glutaminyl-tRNA synthetases. The reaction takes place in the presence of glutamine and ATP through an activated phospho-Asp-tRNA(Asn) or phospho-Glu-tRNA(Gln). The polypeptide is Aspartyl/glutamyl-tRNA(Asn/Gln) amidotransferase subunit C (Halorhodospira halophila (strain DSM 244 / SL1) (Ectothiorhodospira halophila (strain DSM 244 / SL1))).